The sequence spans 386 residues: MSELIQNVKTSFEQVLGYAPSHIIQAPGRVNLIGEHTDYNDGFVLPCAINYQTVVAAAKREDNLVRVVSVDYGNAVDEFDITQAITFQQDKMWANYIRGVVKCLLARGYAFTGADISVSGNVPQGAGLSSSAALEVVIGQTFKVLFNLEISQAEIALNGQQAENEFVGCNCGIMDQMISAEGRENHAMLLDCRSLETESVSMPEEMAVVIINSNKKRGLVDSEYNTRRQQCEEAARIFGVKALRDVTIEQFNEKVAELDEMVAKRARHVITENDRTVEAAQALRAHDMKRMGELMAESHASMRDDFEITVKEIDTLVEIVKEVIGDQGGVRMTGGGFGGCIVALVPPALVDDVKATVAAKYQAATGLKESIYVCQAKDGAGLVEML.

E35 to D38 contacts substrate. Residues S69 and G125 to S131 contribute to the ATP site. Mg(2+) is bound by residues S131 and E163. The Proton acceptor role is filled by D175. A substrate-binding site is contributed by Y224.

This sequence belongs to the GHMP kinase family. GalK subfamily.

Its subcellular location is the cytoplasm. It catalyses the reaction alpha-D-galactose + ATP = alpha-D-galactose 1-phosphate + ADP + H(+). It participates in carbohydrate metabolism; galactose metabolism. Functionally, catalyzes the transfer of the gamma-phosphate of ATP to D-galactose to form alpha-D-galactose-1-phosphate (Gal-1-P). The protein is Galactokinase of Vibrio vulnificus (strain YJ016).